The primary structure comprises 350 residues: Selenide, water dikinase (350 aa).

Sec15 is a catalytic residue. Residue Sec15 is a non-standard amino acid, selenocysteine. ATP-binding positions include Lys18 and His47–Glu49. Asp50 lines the Mg(2+) pocket. ATP-binding positions include Asp67, Asp90, and Gly138–Ser140. Asp90 is a Mg(2+) binding site. Asp227 provides a ligand contact to Mg(2+).

Belongs to the selenophosphate synthase 1 family. Class I subfamily. In terms of assembly, homodimer. Requires Mg(2+) as cofactor.

The catalysed reaction is hydrogenselenide + ATP + H2O = selenophosphate + AMP + phosphate + 2 H(+). Functionally, synthesizes selenophosphate from selenide and ATP. This chain is Selenide, water dikinase, found in Nitratidesulfovibrio vulgaris (strain DSM 19637 / Miyazaki F) (Desulfovibrio vulgaris).